Consider the following 681-residue polypeptide: MKTTCLLISLILIQGVKTLPILEIASNIQPQNVDSVCSGTLQKTEDVHLMGFTLSGQKVADSPLEASKRWAFRAGVPPKNVEYTEGEEAKTCYNISVTDPSGKSLLLDPPTNIRDYPKCKTIHHIQGQNPHAQGIALHLWGAFFLYDRIASTTMYRGKVFTEGNIAAMIVNKTVHKMIFSRQGQGYRHMNLTSTNKYWTSSNGTQTNDTGCFGTLQEYNSTKNQTCAPSKKPLPLPTAHPEVKLTSTSTDATKLNTTDPNSDDEDLTTSGSGSGEQEPYTTSDAATKQGLSSTMPPTPSPQPSTPQQGGNNTNHSQGVVTEPGKTNTTAQPSMPPHNTTTISTNNTSKHNLSTPSVPIQNATNYNTQSTAPENEQTSAPSKTTLLPTENPTTAKSTNSTKSPTTTVPNTTNKYSTSPSPTPNSTAQHLVYFRRKRNILWREGDMFPFLDGLINAPIDFDPVPNTKTIFDESSSSGASAEEDQHASPNISLTLSYFPKVNENTAHSGENENDCDAELRIWSVQEDDLAAGLSWIPFFGPGIEGLYTAGLIKNQNNLVCRLRRLANQTAKSLELLLRVTTEERTFSLINRHAIDFLLARWGGTCKVLGPDCCIGIEDLSRNISEQIDQIKKDEQKEGTGWGLGGKWWTSDWGVLTNLGILLLLSIAVLIALSCICRIFTKYIG.

The signal sequence occupies residues 1–18; sequence MKTTCLLISLILIQGVKT. The Extracellular segment spans residues 19-648; sequence LPILEIASNI…GLGGKWWTSD (630 aa). The segment at 38–188 is receptor-binding; it reads SGTLQKTEDV…FSRQGQGYRH (151 aa). Residues Asn-94, Asn-171, Asn-190, Asn-202, Asn-207, Asn-219, Asn-223, and Asn-255 are each glycosylated (N-linked (GlcNAc...) asparagine; by host). The disordered stretch occupies residues 222-424; the sequence is KNQTCAPSKK…TSPSPTPNST (203 aa). Composition is skewed to polar residues over residues 244 to 259, 278 to 290, and 308 to 331; these read LTST…TTDP, PYTT…KQGL, and GGNN…TAQP. The segment at 277–455 is mucin-like region; that stretch reads EPYTTSDAAT…PFLDGLINAP (179 aa). N-linked (GlcNAc...) asparagine; by host glycosylation is found at Asn-310, Asn-313, Asn-326, Asn-337, Asn-344, Asn-345, Asn-350, Asn-360, Asn-397, Asn-408, Asn-422, and Asn-487. Residues 337-347 show a composition bias toward low complexity; it reads NTTTISTNNTS. Residues 348-388 show a composition bias toward polar residues; the sequence is KHNLSTPSVPIQNATNYNTQSTAPENEQTSAPSKTTLLPTE. Over residues 389–424 the composition is skewed to low complexity; it reads NPTTAKSTNSTKSPTTTVPNTTNKYSTSPSPTPNST. The interval 529–549 is fusion peptide; sequence GLSWIPFFGPGIEGLYTAGLI. N-linked (GlcNAc...) asparagine; by host glycosylation is found at Asn-564 and Asn-619. The helical transmembrane segment at 649–669 threads the bilayer; the sequence is WGVLTNLGILLLLSIAVLIAL. The Cytoplasmic portion of the chain corresponds to 670–681; that stretch reads SCICRIFTKYIG. S-palmitoyl cysteine; by host attachment occurs at residues Cys-671 and Cys-673.

It belongs to the filoviruses glycoprotein family. Homotrimer; each monomer consists of a GP1 and a GP2 subunit linked by disulfide bonds. The resulting peplomers (GP1,2) protrude from the virus surface as spikes. GP1,2 interacts with human CD209 and CLEC4M (collectively referred to as DC-SIGN(R)). Asialoglycoprotein receptor (ASGP-R) may be a liver-specific receptor for GP1,2. Members of the Tyro3 receptor tyrosine kinase family may be cell entry factors interacting with GP1,2. Post-translationally, N-glycosylated. In terms of processing, O-glycosylated in the mucin-like region. Specific enzymatic cleavages in vivo yield mature proteins. The precursor is processed into GP1 and GP2 by host cell furin in the trans Golgi, and maybe by other host proteases, to yield the mature GP1 and GP2 proteins. The cleavage site corresponds to the furin optimal cleavage sequence [KR]-X-[KR]-R. Post-translationally, GP1 is phosphorylated on serine residues between residues 260 and 273.

It is found in the virion membrane. The protein localises to the host cell membrane. In terms of biological role, GP1 is responsible for binding to the receptor(s) on target cells. Interacts with CD209/DC-SIGN and CLEC4M/DC-SIGNR which act as cofactors for virus entry into the host cell. Binding to CD209 and CLEC4M, which are respectively found on dendritic cells (DCs), and on endothelial cells of liver sinusoids and lymph node sinuses, facilitate infection of macrophages and endothelial cells. These interactions not only facilitate virus cell entry, but also allow capture of viral particles by DCs and subsequent transmission to susceptible cells without DCs infection (trans infection). Its function is as follows. GP2 acts as a class I viral fusion protein. Under the current model, the protein has at least 3 conformational states: pre-fusion native state, pre-hairpin intermediate state, and post-fusion hairpin state. During viral and target cell membrane fusion, the coiled coil regions (heptad repeats) assume a trimer-of-hairpins structure, positioning the fusion peptide in close proximity to the C-terminal region of the ectodomain. The formation of this structure appears to drive apposition and subsequent fusion of viral and target cell membranes. Responsible for penetration of the virus into the cell cytoplasm by mediating the fusion of the membrane of the endocytosed virus particle with the endosomal membrane. Low pH in endosomes induces an irreversible conformational change in GP2, releasing the fusion hydrophobic peptide. The protein is Envelope glycoprotein (GP) of Chlorocebus aethiops (Green monkey).